The chain runs to 567 residues: 2-succinyl-5-enolpyruvyl-6-hydroxy-3-cyclohexene-1-carboxylate synthase (567 aa).

The protein belongs to the TPP enzyme family. MenD subfamily. In terms of assembly, homodimer. Mg(2+) is required as a cofactor. It depends on Mn(2+) as a cofactor. Requires thiamine diphosphate as cofactor.

The catalysed reaction is isochorismate + 2-oxoglutarate + H(+) = 5-enolpyruvoyl-6-hydroxy-2-succinyl-cyclohex-3-ene-1-carboxylate + CO2. The protein operates within quinol/quinone metabolism; 1,4-dihydroxy-2-naphthoate biosynthesis; 1,4-dihydroxy-2-naphthoate from chorismate: step 2/7. It participates in quinol/quinone metabolism; menaquinone biosynthesis. Its function is as follows. Catalyzes the thiamine diphosphate-dependent decarboxylation of 2-oxoglutarate and the subsequent addition of the resulting succinic semialdehyde-thiamine pyrophosphate anion to isochorismate to yield 2-succinyl-5-enolpyruvyl-6-hydroxy-3-cyclohexene-1-carboxylate (SEPHCHC). This is 2-succinyl-5-enolpyruvyl-6-hydroxy-3-cyclohexene-1-carboxylate synthase from Yersinia pseudotuberculosis serotype I (strain IP32953).